The primary structure comprises 237 residues: Ribosomal RNA small subunit methyltransferase G (237 aa).

S-adenosyl-L-methionine is bound by residues G78, F83, A129–E130, and R148.

It belongs to the methyltransferase superfamily. RNA methyltransferase RsmG family.

Its subcellular location is the cytoplasm. Functionally, specifically methylates the N7 position of a guanine in 16S rRNA. This chain is Ribosomal RNA small subunit methyltransferase G, found in Streptococcus pyogenes serotype M3 (strain ATCC BAA-595 / MGAS315).